A 131-amino-acid chain; its full sequence is Peptide methionine sulfoxide reductase MsrB (131 aa).

The MsrB domain maps to 8 to 130 (LDEWRSMLDP…NSVCIDLRPR (123 aa)). Zn(2+) contacts are provided by Cys47, Cys50, Cys96, and Cys99. Residue Cys119 is the Nucleophile of the active site.

The protein belongs to the MsrB Met sulfoxide reductase family. Zn(2+) is required as a cofactor.

The catalysed reaction is L-methionyl-[protein] + [thioredoxin]-disulfide + H2O = L-methionyl-(R)-S-oxide-[protein] + [thioredoxin]-dithiol. The polypeptide is Peptide methionine sulfoxide reductase MsrB (Pseudomonas putida (strain ATCC 700007 / DSM 6899 / JCM 31910 / BCRC 17059 / LMG 24140 / F1)).